Reading from the N-terminus, the 249-residue chain is MSGHSKWATIKRKKDAIDSKRGAIFTRVGKEITVAAKMGGGDPEGNPRLRLAILKAKSVNMPKDNIERAIRKGTGELEGVTYEECLYECFGPGGIAIMVSAVTDKKSRTTPEIKSILTKLGGSLATSGSVSRLFEKKGVIVLESSQISEDELVDVAVGGGAEDVINEGDVYRVISVPDNYETVLHALNEKGLKSEESEIRYIPLVSSEIADKEVAEKIMKLIDQLDGHDDVTSVTSNFELASSLEKEFE.

It belongs to the TACO1 family.

It is found in the cytoplasm. This Leptospira interrogans serogroup Icterohaemorrhagiae serovar copenhageni (strain Fiocruz L1-130) protein is Probable transcriptional regulatory protein LIC_12886.